The following is a 341-amino-acid chain: Glyceraldehyde-3-phosphate dehydrogenase (341 aa).

NAD(+) contacts are provided by residues 11-12 (TI) and glycine 109. A D-glyceraldehyde 3-phosphate-binding site is contributed by 138 to 140 (SCN). Cysteine 139 (nucleophile) is an active-site residue. An NAD(+)-binding site is contributed by arginine 167. Residues threonine 169 and 192–193 (HA) contribute to the D-glyceraldehyde 3-phosphate site. Glutamine 299 contacts NAD(+).

It belongs to the glyceraldehyde-3-phosphate dehydrogenase family. As to quaternary structure, homotetramer.

The protein localises to the cytoplasm. It carries out the reaction D-glyceraldehyde 3-phosphate + phosphate + NADP(+) = (2R)-3-phospho-glyceroyl phosphate + NADPH + H(+). The catalysed reaction is D-glyceraldehyde 3-phosphate + phosphate + NAD(+) = (2R)-3-phospho-glyceroyl phosphate + NADH + H(+). It participates in carbohydrate degradation; glycolysis; pyruvate from D-glyceraldehyde 3-phosphate: step 1/5. The chain is Glyceraldehyde-3-phosphate dehydrogenase from Picrophilus torridus (strain ATCC 700027 / DSM 9790 / JCM 10055 / NBRC 100828 / KAW 2/3).